The chain runs to 118 residues: Large ribosomal subunit protein bL20 (118 aa).

It belongs to the bacterial ribosomal protein bL20 family.

Functionally, binds directly to 23S ribosomal RNA and is necessary for the in vitro assembly process of the 50S ribosomal subunit. It is not involved in the protein synthesizing functions of that subunit. The protein is Large ribosomal subunit protein bL20 of Aeromonas hydrophila subsp. hydrophila (strain ATCC 7966 / DSM 30187 / BCRC 13018 / CCUG 14551 / JCM 1027 / KCTC 2358 / NCIMB 9240 / NCTC 8049).